Here is a 76-residue protein sequence, read N- to C-terminus: ATP synthase subunit c (76 aa).

2 consecutive transmembrane segments (helical) span residues 5 to 25 (GIIAIAAAIAAFTGIGAGIGI) and 54 to 74 (AALAEATAIYGLVVALVLVFL).

The protein belongs to the ATPase C chain family. As to quaternary structure, F-type ATPases have 2 components, F(1) - the catalytic core - and F(0) - the membrane proton channel. F(1) has five subunits: alpha(3), beta(3), gamma(1), delta(1), epsilon(1). F(0) has three main subunits: a(1), b(2) and c(10-14). The alpha and beta chains form an alternating ring which encloses part of the gamma chain. F(1) is attached to F(0) by a central stalk formed by the gamma and epsilon chains, while a peripheral stalk is formed by the delta and b chains.

The protein resides in the cell membrane. Its function is as follows. F(1)F(0) ATP synthase produces ATP from ADP in the presence of a proton or sodium gradient. F-type ATPases consist of two structural domains, F(1) containing the extramembraneous catalytic core and F(0) containing the membrane proton channel, linked together by a central stalk and a peripheral stalk. During catalysis, ATP synthesis in the catalytic domain of F(1) is coupled via a rotary mechanism of the central stalk subunits to proton translocation. In terms of biological role, key component of the F(0) channel; it plays a direct role in translocation across the membrane. A homomeric c-ring of between 10-14 subunits forms the central stalk rotor element with the F(1) delta and epsilon subunits. This is ATP synthase subunit c from Ruminiclostridium cellulolyticum (strain ATCC 35319 / DSM 5812 / JCM 6584 / H10) (Clostridium cellulolyticum).